Here is a 480-residue protein sequence, read N- to C-terminus: Radical SAM Nalpha-GlyT isomerase (480 aa).

Positions 125, 129, and 132 each coordinate iron-sulfur cluster. The disordered stretch occupies residues 457–480 (KIVEPTPPEEDGGERKIIPITQID).

It carries out the reaction 5-N(alpha)-glycyl-dTMP in DNA + AH2 + S-adenosyl-L-methionine = 5-C(alpha)-glycyl-dTMP in DNA + 5'-deoxyadenosine + L-methionine + A + H(+). Its function is as follows. Isomerizes 5-N-alpha-glycinylthymidine (Nalpha-GlyT) into 5-Calpha-glycinylthymidine (Calpha-GlyT) as a step in the pathway leading to thymidine hypermodifications in the viral genome. As a final result of the pathway of hypermodification, 5-aminoethyl-2'-deoxyuridine (5-NedU) substitutes for about 30% of thymidines in the viral DNA. These modifications probably prevent degradation of viral genome by the host restriction-modification antiviral defense system. This Pseudomonas phage M6 protein is Radical SAM Nalpha-GlyT isomerase.